We begin with the raw amino-acid sequence, 629 residues long: tRNA uridine 5-carboxymethylaminomethyl modification enzyme MnmG (629 aa).

13–18 (GGGHAG) is an FAD binding site. Residue 273–287 (GPRYCPSIEDKIHRF) participates in NAD(+) binding.

Belongs to the MnmG family. In terms of assembly, homodimer. Heterotetramer of two MnmE and two MnmG subunits. FAD serves as cofactor.

It localises to the cytoplasm. Functionally, NAD-binding protein involved in the addition of a carboxymethylaminomethyl (cmnm) group at the wobble position (U34) of certain tRNAs, forming tRNA-cmnm(5)s(2)U34. This chain is tRNA uridine 5-carboxymethylaminomethyl modification enzyme MnmG, found in Shewanella baltica (strain OS195).